Reading from the N-terminus, the 266-residue chain is Undecaprenyl-diphosphatase (266 aa).

8 helical membrane passes run 1 to 21 (MDTF…FLPI), 39 to 59 (QGLA…VLYF), 83 to 103 (SKLA…GFAL), 111 to 131 (LRGP…LWWA), 144 to 164 (TGWK…IPGT), 183 to 203 (AAAR…AILM), 218 to 238 (SLAL…HLFL), and 246 to 266 (MTPF…FIFM).

This sequence belongs to the UppP family.

It localises to the cell inner membrane. It carries out the reaction di-trans,octa-cis-undecaprenyl diphosphate + H2O = di-trans,octa-cis-undecaprenyl phosphate + phosphate + H(+). In terms of biological role, catalyzes the dephosphorylation of undecaprenyl diphosphate (UPP). Confers resistance to bacitracin. This Shewanella woodyi (strain ATCC 51908 / MS32) protein is Undecaprenyl-diphosphatase.